The following is a 466-amino-acid chain: MEIGTSSTTNNIGVAPTIPQDIVNNNNHNNNSSNNSSNNNSISSSPTDSSQLMNGEQSTSPPSPPIEEVLEEEPRNLLISLLSELKIGVDLSRVPLPTFILEPRSLLEKFTDNMIHGEILCNLSKLESPMDRMHLITKWYLSAFHYRKKGLQKPYNPILGEIFRTRWEFKETNSNCIMVAEQISHHPPVSCIYLSNRKDGYTMTGTINPRSKFLGNSMAVIVDGSSTLTLLGLQEEYVITFPTAVARGIIFGTLLTEIVGNSTISCKQTNIKVEMDFKAKPMFGGEYNVVCGKIKKGNETTHTFNGKWDKKVEITLSSSSSSSKKKNGSTNDILWDCNDAVKTQMITRQISEQEEFESQRLWQKVSHAIIKKNQKDATFEKNKLEDEQRKRVKDRKENNIEWEPRLFKKVNDQWIYKYQNHTLYDQNEPKEIETDGIIHFEGTLIKKESKQNLVEKCGASENEIIV.

The segment covering 1-12 has biased composition (polar residues); the sequence is MEIGTSSTTNNI. The segment at 1–67 is disordered; the sequence is MEIGTSSTTN…STSPPSPPIE (67 aa). The span at 24 to 45 shows a compositional bias: low complexity; that stretch reads NNNNHNNNSSNNSSNNNSISSS. The segment covering 46 to 60 has biased composition (polar residues); the sequence is PTDSSQLMNGEQSTS.

It belongs to the OSBP family.

This chain is Oxysterol-binding protein 4 (osbD), found in Dictyostelium discoideum (Social amoeba).